Reading from the N-terminus, the 486-residue chain is Cardiolipin synthase A (486 aa).

2 helical membrane passes run T3 to V23 and M38 to V58. PLD phosphodiesterase domains lie at M219–R246 and E399–S426. Catalysis depends on residues H224, K226, D231, H404, K406, and D411.

The protein belongs to the phospholipase D family. Cardiolipin synthase subfamily. ClsA sub-subfamily.

The protein resides in the cell inner membrane. The enzyme catalyses 2 a 1,2-diacyl-sn-glycero-3-phospho-(1'-sn-glycerol) = a cardiolipin + glycerol. In terms of biological role, catalyzes the reversible phosphatidyl group transfer from one phosphatidylglycerol molecule to another to form cardiolipin (CL) (diphosphatidylglycerol) and glycerol. This Escherichia coli O7:K1 (strain IAI39 / ExPEC) protein is Cardiolipin synthase A.